A 352-amino-acid chain; its full sequence is UDP-N-acetylglucosamine--N-acetylmuramyl-(pentapeptide) pyrophosphoryl-undecaprenol N-acetylglucosamine transferase (352 aa).

2 residues coordinate UDP-N-acetyl-alpha-D-glucosamine: serine 195 and glutamine 287.

It belongs to the glycosyltransferase 28 family. MurG subfamily.

It localises to the cell membrane. It catalyses the reaction Mur2Ac(oyl-L-Ala-gamma-D-Glu-L-Lys-D-Ala-D-Ala)-di-trans,octa-cis-undecaprenyl diphosphate + UDP-N-acetyl-alpha-D-glucosamine = beta-D-GlcNAc-(1-&gt;4)-Mur2Ac(oyl-L-Ala-gamma-D-Glu-L-Lys-D-Ala-D-Ala)-di-trans,octa-cis-undecaprenyl diphosphate + UDP + H(+). The protein operates within cell wall biogenesis; peptidoglycan biosynthesis. Its function is as follows. Cell wall formation. Catalyzes the transfer of a GlcNAc subunit on undecaprenyl-pyrophosphoryl-MurNAc-pentapeptide (lipid intermediate I) to form undecaprenyl-pyrophosphoryl-MurNAc-(pentapeptide)GlcNAc (lipid intermediate II). The sequence is that of UDP-N-acetylglucosamine--N-acetylmuramyl-(pentapeptide) pyrophosphoryl-undecaprenol N-acetylglucosamine transferase from Streptococcus pneumoniae (strain CGSP14).